A 377-amino-acid chain; its full sequence is tRNA-specific 2-thiouridylase MnmA (377 aa).

Residues 17–24 and Met-43 each bind ATP; that span reads GMSGGVDS. Residues 103–105 are interaction with target base in tRNA; sequence NPD. Cys-108 serves as the catalytic Nucleophile. A disulfide bridge links Cys-108 with Cys-204. Residue Gly-132 coordinates ATP. Residues 154–156 are interaction with tRNA; it reads KDQ. Cys-204 serves as the catalytic Cysteine persulfide intermediate. The interaction with tRNA stretch occupies residues 316-317; sequence RY.

The protein belongs to the MnmA/TRMU family.

The protein localises to the cytoplasm. It carries out the reaction S-sulfanyl-L-cysteinyl-[protein] + uridine(34) in tRNA + AH2 + ATP = 2-thiouridine(34) in tRNA + L-cysteinyl-[protein] + A + AMP + diphosphate + H(+). Catalyzes the 2-thiolation of uridine at the wobble position (U34) of tRNA, leading to the formation of s(2)U34. The polypeptide is tRNA-specific 2-thiouridylase MnmA (Pseudomonas fluorescens (strain ATCC BAA-477 / NRRL B-23932 / Pf-5)).